The following is a 116-amino-acid chain: Large ribosomal subunit protein bL19 (116 aa).

The protein belongs to the bacterial ribosomal protein bL19 family.

Its function is as follows. This protein is located at the 30S-50S ribosomal subunit interface and may play a role in the structure and function of the aminoacyl-tRNA binding site. In Mycoplasma mobile (strain ATCC 43663 / 163K / NCTC 11711) (Mesomycoplasma mobile), this protein is Large ribosomal subunit protein bL19.